The following is a 90-amino-acid chain: Small ribosomal subunit protein bS16 (90 aa).

The protein belongs to the bacterial ribosomal protein bS16 family.

In Oceanobacillus iheyensis (strain DSM 14371 / CIP 107618 / JCM 11309 / KCTC 3954 / HTE831), this protein is Small ribosomal subunit protein bS16.